Reading from the N-terminus, the 991-residue chain is Ribonuclease TUDOR 1 (991 aa).

N-acetylalanine is present on Ala2. TNase-like domains lie at 8–151, 186–364, 378–557, and 587–714; these read QWLK…RWSK, KPME…MWAN, QNFT…IHSA, and RRIP…IWEN. The segment at 227–250 is disordered; it reads RTTNGSVVETVPDEPNGDVSAESR. The Tudor domain maps to 782-847; sequence NPKRGDIVLA…RPIDPSVSAA (66 aa). Phosphotyrosine is present on Tyr970. Residues 971–991 form a disordered region; the sequence is GDIESDDEDTGPARKPAGGRR. At Ser975 the chain carries Phosphoserine. Position 980 is a phosphothreonine (Thr980).

In terms of tissue distribution, expressed in seeds, leaves, flowers, roots and siliques (at protein level). Accumulates in the cap and elongation zone of the root apices (at protein level).

It is found in the cytoplasm. It localises to the cytoplasmic granule. Its subcellular location is the perinuclear region. The protein resides in the endoplasmic reticulum. With respect to regulation, repressed by the specific inhibitor 3',5'-deoxythymidine bisphosphate (pdTp); this RNase activity inhibition impairs subcellular relocation upon abiotic stress and leads to reduced stress resistance. Its function is as follows. Cytoprotective ribonuclease (RNase) required for resistance to abiotic stresses, acting as a positive regulator of mRNA decapping during stress. Essential for the integrity and function of cytoplasmic messenger ribonucleoprotein (mRNP) complexes called stress granules (SGs) and processing bodies (PBs), sites of post-transcriptional gene regulation during stress (e.g. salt and heat). Involved in gibberellic acid (GA) biosynthesis. Essential for stress tolerance, probably by regulating mRNAs entering the secretory pathway. Component of stress granules (SGs) that regulates growth under salt stress by modulating levels of GA20OX3 mRNA. Binds GA20OX3 mRNA. May inhibit the degradation of mRNAs involved in stress adaptation. In Arabidopsis thaliana (Mouse-ear cress), this protein is Ribonuclease TUDOR 1.